Consider the following 191-residue polypeptide: Potassium-transporting ATPase KdpC subunit (191 aa).

A helical transmembrane segment spans residues 13–35 (VLFTGLCGLAYPLAITGVAQAVL). Positions 112-132 (SGPVPADAVTSSASGLDPDIS) are disordered.

The protein belongs to the KdpC family. As to quaternary structure, the system is composed of three essential subunits: KdpA, KdpB and KdpC.

It localises to the cell inner membrane. Functionally, part of the high-affinity ATP-driven potassium transport (or Kdp) system, which catalyzes the hydrolysis of ATP coupled with the electrogenic transport of potassium into the cytoplasm. This subunit acts as a catalytic chaperone that increases the ATP-binding affinity of the ATP-hydrolyzing subunit KdpB by the formation of a transient KdpB/KdpC/ATP ternary complex. The sequence is that of Potassium-transporting ATPase KdpC subunit from Allorhizobium ampelinum (strain ATCC BAA-846 / DSM 112012 / S4) (Agrobacterium vitis (strain S4)).